Reading from the N-terminus, the 1867-residue chain is TATA-binding protein-associated factor MOT1 (1867 aa).

Residue Ser-93 is modified to Phosphoserine. Positions 169-228 are disordered; that stretch reads KTDDIKQETSMLNASDKANENKSNANKKSARMLAMARRKKKMSAKNTPKHPVDITESSVS. The segment covering 181–203 has biased composition (low complexity); it reads NASDKANENKSNANKKSARMLAM. Residues 195–211 carry the Nuclear localization signal motif; sequence KKSARMLAMARRKKKMS. 3 HEAT repeats span residues 289-326, 445-482, and 541-578; these read WQFQGIYELLLDNLMSENWEIRHGAALGLRELVKKHAY, GLLENVVRIVLYGLNQSDDDVQSVAASILTPITSEFVK, and WSFKSLVPKLYPFLRHSISSVRRAVLNLLIAFLSIKDD. A Phosphoserine modification is found at Ser-677. HEAT repeat units follow at residues 1108–1145 and 1188–1225; these read SEVFTRFPVLLTFLRSNLSVFRYSAARTFADLAKISSV and PYVIFLIVPLLGRMSDSNEDVRNLATTTFASIIKLVPL. The Helicase ATP-binding domain occupies 1284–1457; sequence AFLNKYHLHG…WSLFDFLMPG (174 aa). 1297–1304 contributes to the ATP binding site; it reads DDMGLGKT. Residues 1408-1411 carry the DEGH box motif; it reads DEGH. An HEAT 6 repeat occupies 1495–1537; that stretch reads ALHKQVLPFMLRRLKEDVLSDLPPKIIQDYYCELGDLQKQLYM. The Helicase C-terminal domain occupies 1639–1787; it reads PIQNVISQHR…STVVNQQNSG (149 aa). Residues 1802–1822 are disordered; it reads PDNVTSQDNEEKNNGDSQAAK.

The protein belongs to the SNF2/RAD54 helicase family. As to quaternary structure, forms a complex with TBP which binds TATA DNA with high affinity but with altered specificity.

It localises to the mitochondrion. The protein resides in the nucleus. Functionally, regulates transcription in association with TATA binding protein (TBP). Removes TBP from the TATA box via its C-terminal ATPase activity. Both transcription activation and repression require its ATPase activity. In Saccharomyces cerevisiae (strain ATCC 204508 / S288c) (Baker's yeast), this protein is TATA-binding protein-associated factor MOT1 (MOT1).